The chain runs to 217 residues: tRNA (guanine-N(7)-)-methyltransferase (217 aa).

S-adenosyl-L-methionine-binding residues include Glu44, Glu69, Asp96, and Asp118. Asp118 is a catalytic residue. Substrate contacts are provided by residues Lys122, Asp154, and 191 to 194 (TEYE).

Belongs to the class I-like SAM-binding methyltransferase superfamily. TrmB family.

It catalyses the reaction guanosine(46) in tRNA + S-adenosyl-L-methionine = N(7)-methylguanosine(46) in tRNA + S-adenosyl-L-homocysteine. It participates in tRNA modification; N(7)-methylguanine-tRNA biosynthesis. Its function is as follows. Catalyzes the formation of N(7)-methylguanine at position 46 (m7G46) in tRNA. In Bacillus cereus (strain B4264), this protein is tRNA (guanine-N(7)-)-methyltransferase.